The primary structure comprises 186 residues: MAETSSLISGVAQRYAGSLFELALDANSVASVEKDLGRFEALLSGSEDLRRLISSPVFSSEDQLHAIGAIADKAGIKGLVGNFLRVVAQNRRLFALPGIIAAFRQIAAEHRGEISADVVSAHELTSAQQNELKATLKGVAGKDVTINVTVDPSILGGLIVKMGSRQIDTSLRTKLSSLKLALKEVG.

This sequence belongs to the ATPase delta chain family. In terms of assembly, F-type ATPases have 2 components, F(1) - the catalytic core - and F(0) - the membrane proton channel. F(1) has five subunits: alpha(3), beta(3), gamma(1), delta(1), epsilon(1). F(0) has three main subunits: a(1), b(2) and c(10-14). The alpha and beta chains form an alternating ring which encloses part of the gamma chain. F(1) is attached to F(0) by a central stalk formed by the gamma and epsilon chains, while a peripheral stalk is formed by the delta and b chains.

It is found in the cell inner membrane. Functionally, f(1)F(0) ATP synthase produces ATP from ADP in the presence of a proton or sodium gradient. F-type ATPases consist of two structural domains, F(1) containing the extramembraneous catalytic core and F(0) containing the membrane proton channel, linked together by a central stalk and a peripheral stalk. During catalysis, ATP synthesis in the catalytic domain of F(1) is coupled via a rotary mechanism of the central stalk subunits to proton translocation. In terms of biological role, this protein is part of the stalk that links CF(0) to CF(1). It either transmits conformational changes from CF(0) to CF(1) or is implicated in proton conduction. The sequence is that of ATP synthase subunit delta from Brucella canis (strain ATCC 23365 / NCTC 10854 / RM-666).